The sequence spans 224 residues: Cytochrome c biogenesis ATP-binding export protein CcmA (224 aa).

The ABC transporter domain maps to 1-220; that stretch reads MQNAEAAPAL…EYAHAEVVGA (220 aa). 40-47 provides a ligand contact to ATP; that stretch reads GANGSGKT.

The protein belongs to the ABC transporter superfamily. CcmA exporter (TC 3.A.1.107) family. The complex is composed of two ATP-binding proteins (CcmA) and two transmembrane proteins (CcmB).

It is found in the cell inner membrane. The catalysed reaction is heme b(in) + ATP + H2O = heme b(out) + ADP + phosphate + H(+). Part of the ABC transporter complex CcmAB involved in the biogenesis of c-type cytochromes; once thought to export heme, this seems not to be the case, but its exact role is uncertain. Responsible for energy coupling to the transport system. The protein is Cytochrome c biogenesis ATP-binding export protein CcmA of Bordetella bronchiseptica (strain ATCC BAA-588 / NCTC 13252 / RB50) (Alcaligenes bronchisepticus).